We begin with the raw amino-acid sequence, 117 residues long: Large ribosomal subunit protein bL20c (117 aa).

The protein belongs to the bacterial ribosomal protein bL20 family.

Its subcellular location is the plastid. The protein localises to the chloroplast. Binds directly to 23S ribosomal RNA and is necessary for the in vitro assembly process of the 50S ribosomal subunit. It is not involved in the protein synthesizing functions of that subunit. The protein is Large ribosomal subunit protein bL20c of Eucalyptus globulus subsp. globulus (Tasmanian blue gum).